A 357-amino-acid chain; its full sequence is Multiple sugar-binding periplasmic protein SbpA (357 aa).

The signal sequence occupies residues 1–20 (MSSSFTTTLAGMAVGMLVLA).

The protein belongs to the bacterial solute-binding protein 2 family.

It localises to the periplasm. Its function is as follows. Mediates chemotaxis towards D-galactose, L-arabinose and D-fucose but not towards D-fructose. Probably part of a binding-protein high affinity uptake system. The chain is Multiple sugar-binding periplasmic protein SbpA (sbpA) from Azospirillum brasilense.